A 308-amino-acid polypeptide reads, in one-letter code: uncharacterized protein (308 aa).

This is an uncharacterized protein from Bos taurus (Bovine).